The chain runs to 1037 residues: Ras guanine nucleotide exchange factor E (1037 aa).

Residues 5 to 35 are a coiled coil; sequence ECNNRIEYLQNKVLELESLNENLKGQLEYFQ. Disordered stretches follow at residues 65-100, 114-150, 166-387, 414-437, 451-472, 602-628, 907-935, and 1004-1037; these read NNNN…TTNN, TNSN…ELSN, TTTT…PLSN, TVNM…LYHS, SSLS…LTNP, INSN…NQLE, NTTT…QQLN, and EKET…SFKS. Low complexity-rich tracts occupy residues 114–145 and 166–200; these read TNSN…NNSN and TTTT…NNNN. The span at 229–239 shows a compositional bias: polar residues; that stretch reads PTSSRNSPTNK. A compositionally biased stretch (low complexity) spans 240–276; that stretch reads SSPQFLSPLSKSPLSQSTQSTTVSSPSPSWTTTVPQS. The span at 282–300 shows a compositional bias: polar residues; the sequence is TIVQSKSPYSPDTNISNKL. Low complexity predominate over residues 318–360; that stretch reads SPSKNSPRSLNSNNNNSSATTSITTPPTTSTPTPTTSTTTTTT. Basic and acidic residues predominate over residues 361–370; sequence TERRPEDRRS. 2 stretches are compositionally biased toward polar residues: residues 372 to 387 and 424 to 437; these read TSPF…PLSN and PRSN…LYHS. The N-terminal Ras-GEF domain occupies 496 to 694; the sequence is NGFIVKGGTI…NLKRLLTNDR (199 aa). The 278-residue stretch at 726–1003 folds into the Ras-GEF domain; that stretch reads DPTEIARQLT…YKLSLICEPK (278 aa). Residues 907 to 930 are compositionally biased toward low complexity; sequence NTTTTTTTTTTTTTTNTTTSNNNN. A compositionally biased stretch (polar residues) spans 1027–1037; sequence SVTSLLNSFKS.

Functionally, promotes the exchange of Ras-bound GDP by GTP. Seems to play a role in chemotaxis. The sequence is that of Ras guanine nucleotide exchange factor E (gefE) from Dictyostelium discoideum (Social amoeba).